Consider the following 1265-residue polypeptide: MTTMVNVDTLPEYEKSQIKRALELGTVMTVFSARKSTPERRTVQMIMETRQVAWSKTADKIEGFLDIMEIKEIRPGKNSKDFERAKAVRHKADCCFTIFYGTQFVLSTLSLATDSKEDAVKWLSGLKILHQEAMNASTPTMIESWLRKQIYSVDQTRRNSISLRELKTILPLVNFKVSGIKFLKDKLVEIGAQKDELSFEQFHLFYKKLMFEQQKSILDEFKKDSSVFILGNTDRPDASAVYLQDFQRFLLHEQQELWAQDLNKVRERMTKFIDDTMRETAEPFLFVDEFLTYLFSRENSIWDEKYDAVDMQDMNNPLSHYWISSSHNTYLTGDQLRSESSTEAYIRCLRAGCRCIELDCWDGPDGKPIIYHGWTRTTKIKFDDVVQAIRDHAFVTSSFPVILSIEEHCSVEQQRHMAKVFKEVLGDLLLTKPTEASADQLPSPSQLREKIIIKHKKLGPRGDVDVNVEDKKDEHKTQGELYMWDSIDQKWTRHYCAIADAKLSFSDDIEQTVEEDPVQDTPPTELHFGEKWFHKKVESRTSAEKLLQEYCAETGAKDGTFLVRESETFPNDYTLSFWRSGRVQHCRIRSTMEGGVMKYYLTDNLTFNSIYALIQHYREAHLRCAEFELRLTDPVPNPNPHESKPWYYDRLSRGEAEDMLMRIPRDGAFLIRKREGTDSYAITFRARGKVKHCRINRDGRHFVLGTSAYFESLVELVSYYEKHALYRKMRLRYPVTPELLERYNMERDINSLYDVSRMYVDPSEINPSMPQRTVKALYDYKAKRSDELTFCRGALIHNVSKEPGGWWKGDYGTRIQQYFPSNYVEDISAGDAEEMEKQIIEDNPLGSLCRGILDLNTYNVVKAPQGKNQKAFVFILEPKKQGDPPVEFATDRVEELFEWFQSIREITWKIDTKENNMKYWERNQSIAIELSDLVVYCKPTSKTKDHLENPDFREIRSFVETKADSIVRQKPVDLLRYNQKGLTRVYPKGQRVDSSNYDPFRLWLCGSQMVALNFQTPDKYMQMNHALFSLNGRTGYVLQPESMRSEKYDPMPPESQRKILMTLTVKVLGARHLPKLGRSIACPFVEVEICGAEYDSNKFKTTVVNDNGLSPVWAPTQEKVTFEIYDPNLAFLRFLVYEEDMFSDPNFLAHATYPIKGIKSGFRSVPLKNGYSEDIELASLLVFCEMRPVLESEEELYSSCRQLRRRQEELNNQLFLYDTHQNLRGANRDALVKEFNVNENQLRLYQEKCNRRLREKRVSNSRFYS.

Residues Arg-20–Gln-131 enclose the PH domain. The region spanning Gln-312–Lys-456 is the PI-PLC X-box domain. Active-site residues include His-327 and His-372. SH2 domains are found at residues Trp-532–Val-635 and Trp-646–Val-735. 2 positions are modified to phosphotyrosine; by BTK: Tyr-753 and Tyr-759. Residues Met-769–Ala-829 enclose the SH3 domain. The PI-PLC Y-box domain occupies Leu-930–Arg-1044. Residues Leu-1038 to Asn-1169 form the C2 domain. Phosphotyrosine; by BTK is present on Tyr-1197. Phosphotyrosine is present on residues Tyr-1217 and Tyr-1245.

In terms of assembly, part of a complex composed of EEIG1, TNFRSF11A/RANK, PLCG2, GAB2, TEC and BTK; complex formation increases in the presence of TNFSF11/RANKL. Interacts (via SH2 domain) with CSF1R (tyrosine phosphorylated). Interacts constitutively with THEMIS2. It depends on Ca(2+) as a cofactor. Phosphorylated on tyrosine residues by CSF1R. Phosphorylated on tyrosine residues by BTK and SYK; upon ligand-induced activation of a variety of growth factor receptors and immune system receptors. Phosphorylation leads to increased phospholipase activity.

It localises to the membrane raft. The enzyme catalyses a 1,2-diacyl-sn-glycero-3-phospho-(1D-myo-inositol-4,5-bisphosphate) + H2O = 1D-myo-inositol 1,4,5-trisphosphate + a 1,2-diacyl-sn-glycerol + H(+). Its function is as follows. The production of the second messenger molecules diacylglycerol (DAG) and inositol 1,4,5-trisphosphate (IP3) is mediated by activated phosphatidylinositol-specific phospholipase C enzymes. It is a crucial enzyme in transmembrane signaling. This Rattus norvegicus (Rat) protein is 1-phosphatidylinositol 4,5-bisphosphate phosphodiesterase gamma-2.